The primary structure comprises 253 residues: Phycoerythrobilin:ferredoxin oxidoreductase (253 aa).

Belongs to the HY2 family.

The enzyme catalyses (3Z)-phycoerythrobilin + oxidized 2[4Fe-4S]-[ferredoxin] = 15,16-dihydrobiliverdin + reduced 2[4Fe-4S]-[ferredoxin] + 2 H(+). In terms of biological role, catalyzes the two-electron reduction of the C2 and C3(1) diene system of 15,16-dihydrobiliverdin. The sequence is that of Phycoerythrobilin:ferredoxin oxidoreductase from Prochlorococcus marinus (strain AS9601).